The following is a 510-amino-acid chain: ATP synthase subunit alpha (510 aa).

170–177 (GDRQTGKT) serves as a coordination point for ATP.

It belongs to the ATPase alpha/beta chains family. F-type ATPases have 2 components, CF(1) - the catalytic core - and CF(0) - the membrane proton channel. CF(1) has five subunits: alpha(3), beta(3), gamma(1), delta(1), epsilon(1). CF(0) has three main subunits: a(1), b(2) and c(9-12). The alpha and beta chains form an alternating ring which encloses part of the gamma chain. CF(1) is attached to CF(0) by a central stalk formed by the gamma and epsilon chains, while a peripheral stalk is formed by the delta and b chains.

It localises to the cell inner membrane. It catalyses the reaction ATP + H2O + 4 H(+)(in) = ADP + phosphate + 5 H(+)(out). In terms of biological role, produces ATP from ADP in the presence of a proton gradient across the membrane. The alpha chain is a regulatory subunit. In Maricaulis maris (strain MCS10) (Caulobacter maris), this protein is ATP synthase subunit alpha.